Consider the following 117-residue polypeptide: Resistin-like gamma (117 aa).

An N-terminal signal peptide occupies residues 1-29 (MLTFNKMKTTTCSLLICISLLQLMVPVNT). Intrachain disulfides connect Cys61/Cys114, Cys73/Cys113, Cys82/Cys99, Cys84/Cys101, and Cys88/Cys103.

It belongs to the resistin/FIZZ family. As to quaternary structure, homodimer. Heterodimer with RETNLB. As to expression, expressed in colon, lung, spleen, pancreas, ileum and bone marrow (at protein level). In colon, found throughout the crypt and surface epithelium, including goblet cells (at protein level). Highest expression is observed in bone marrow, spleen and lung, with lower levels in other tissues. Detected at low levels in granulocytes, but not found in monocytes or lymphocytes. Has very weak expression in white adipose tissue.

It localises to the secreted. Its function is as follows. Probable hormone. Promotes chemotaxis in myeloid cells. This Mus musculus (Mouse) protein is Resistin-like gamma.